A 460-amino-acid chain; its full sequence is NADH-ubiquinone oxidoreductase chain 4 (460 aa).

The next 13 helical transmembrane spans lie at 22 to 42, 59 to 79, 94 to 113, 117 to 139, 148 to 168, 195 to 215, 231 to 251, 258 to 278, 286 to 306, 310 to 330, 343 to 362, 394 to 414, and 436 to 456; these read WLWSSITTHSLLISLLSLSWF, IDPLSAPLLILTCWLLPLMIL, RIYISLLISLQVFLIMAFSA, ILFYIMFEATLIPTLIIITRWGN, TYFLFYTLIGSLPLLIALLFM, FWWTACLIAFLVKMPLYGVHL, ILAAVLLKLGGYGMMRIIIML, MAYPFIILAIWGIVMTSSICL, MIAYSSVSHMGLVAGAILIQT, FAGAITLMIAHGLVSSALFCL, LLLARGVQVILPLMATWWLL, ILLTGIGVLITASYSLYMFLM, and LLLTLHVLPVLLLILKPELIW.

This sequence belongs to the complex I subunit 4 family.

The protein localises to the mitochondrion membrane. It carries out the reaction a ubiquinone + NADH + 5 H(+)(in) = a ubiquinol + NAD(+) + 4 H(+)(out). Core subunit of the mitochondrial membrane respiratory chain NADH dehydrogenase (Complex I) that is believed to belong to the minimal assembly required for catalysis. Complex I functions in the transfer of electrons from NADH to the respiratory chain. The immediate electron acceptor for the enzyme is believed to be ubiquinone. This chain is NADH-ubiquinone oxidoreductase chain 4 (MTND4), found in Scyliorhinus canicula (Small-spotted catshark).